The chain runs to 60 residues: Metallothionein A (60 aa).

Residues 1 to 28 (MDPCECSKSGTCNCGGSCTCTNCSCKSC) form a beta region. A divalent metal cation-binding residues include cysteine 4, cysteine 6, cysteine 12, cysteine 14, cysteine 18, cysteine 20, cysteine 23, cysteine 25, cysteine 28, cysteine 32, cysteine 33, cysteine 35, cysteine 36, cysteine 40, cysteine 43, cysteine 47, cysteine 49, cysteine 54, cysteine 58, and cysteine 59. Residues 29-60 (KKSCCPCCPSGCTKCASGCVCKGKTCDTSCCQ) are alpha.

Belongs to the metallothionein superfamily. Type 1 family.

Functionally, metallothioneins have a high content of cysteine residues that bind various heavy metals. The polypeptide is Metallothionein A (mta) (Chionodraco rastrospinosus (Ocellated icefish)).